Consider the following 105-residue polypeptide: MKNKIKIRLKSFDHRSLDQATKEIVSAVKRTFAKINGPIPLPKKIGRFTVNRSPHVHKKSREQFEIRKHKRLLVIGDPNPAVVDALSKVDLAAGVDVVIELESGE.

It belongs to the universal ribosomal protein uS10 family. In terms of assembly, part of the 30S ribosomal subunit.

Functionally, involved in the binding of tRNA to the ribosomes. In Rickettsia rickettsii (strain Iowa), this protein is Small ribosomal subunit protein uS10.